Reading from the N-terminus, the 642-residue chain is DNA gyrase subunit B (642 aa).

The region spanning 422–536 is the Toprim domain; it reads CELFIVEGDS…AGYVYIAQPP (115 aa). Mg(2+)-binding residues include Glu428, Asp501, and Asp503.

Belongs to the type II topoisomerase family. In terms of assembly, heterotetramer, composed of two GyrA and two GyrB chains. Within the heterotetramer, GyrA contains the active site tyrosine that forms a covalent intermediate with the DNA, while GyrB contributes the cofactor binding sites and catalyzes ATP hydrolysis. Mg(2+) serves as cofactor. It depends on Mn(2+) as a cofactor. Requires Ca(2+) as cofactor.

The protein localises to the cytoplasm. It catalyses the reaction ATP-dependent breakage, passage and rejoining of double-stranded DNA.. Its activity is regulated as follows. Pyrrolopyrimidines inhibit both GyrB and its paralog in topoisomerase IV (parE). In terms of biological role, DNA gyrase negatively supercoils closed circular double-stranded DNA in an ATP-dependent manner and also catalyzes the interconversion of other topological isomers of double-stranded DNA rings, including catenanes and knotted rings. This Enterococcus faecalis (strain ATCC 700802 / V583) protein is DNA gyrase subunit B.